A 668-amino-acid polypeptide reads, in one-letter code: Phosphatidylinositol 4-phosphate 5-kinase type-1 gamma (668 aa).

The interval 45–67 is disordered; that stretch reads SMTAQPGPGHGKKLGHRGVDASG. The region spanning 75–443 is the PIPK domain; that stretch reads TSSTLKGAIQ…RFFKFMSNTV (369 aa). An N6-acetyllysine mark is found at Lys265 and Lys268. Position 459 is an asymmetric dimethylarginine; alternate (Arg459). An Omega-N-methylarginine; alternate modification is found at Arg459. Residues 526–535 are compositionally biased toward low complexity; that stretch reads TTLSSTSLSI. 2 disordered regions span residues 526-578 and 593-642; these read TTLS…ITVQ and EDAG…YFPT. Ser555 is modified (phosphoserine). Tyr639 is subject to Phosphotyrosine; by EGFR. The segment at 641-668 is mediates interaction with TLN2; the sequence is PTDERSWVYSPLHYSAQAPPASDGESDT. Tyr649 carries the phosphotyrosine; by CSK modification. Ser650 carries the post-translational modification Phosphoserine; by CDK5, MAPK1 and CDK1. Phosphoserine occurs at positions 662 and 666. Residue Thr668 is modified to Phosphothreonine.

As to quaternary structure, interacts with TLN1. Interacts with TLN2; interaction stimulates 1-phosphatidylinositol-4-phosphate 5-kinase activity. May compete with beta-integrins for the same binding site on TLN1 and TLN2. Interacts with ARF6; interaction stimulates 1-phosphatidylinositol-4-phosphate 5-kinase activity. Interacts with AP2B1. Interacts with AP2M1; phosphorylation of PIP5K1C by CSK disrupts the interaction; clathrin competes with PIP5K1C. Interacts with CDH1. Interacts with CSK. Interacts with PLCG1; interaction is abolished upon EGF stimulation. Interacts with LAPTM4B; promotes SNX5 association with LAPTM4B; kinase activity of PIP5K1C is required; interaction is regulated by phosphatidylinositol 4,5-bisphosphate generated by PIP5K1C. In terms of processing, phosphorylation on Ser-650 negatively regulates binding to TLN2 and is strongly stimulated in mitosis. Phosphorylation on Tyr-649 is necessary for targeting to focal adhesions. Phosphorylation on Ser-650 and Tyr-649 are mutually exclusive. Phosphorylated by SYK and CSK. Tyrosine phosphorylation is enhanced by PTK2 signaling. Phosphorylated at Tyr-639 upon EGF stimulation. Some studies suggest that phosphorylation on Tyr-649 enhances binding to tailins (TLN1 and TLN2). According to PubMed:15738269 phosphorylation at Tyr-649 does not directly enhance binding to tailins (TLN1 and TLN2) but may act indirectly by inhibiting phosphorylation at Ser-650. Acetylation at Lys-265 and Lys-268 seems to decrease lipid 1-phosphatidylinositol-4-phosphate 5-kinase activity. Deacetylation of these sites by SIRT1 positively regulates the exocytosis of TSH-containing granules from pituitary cells. As to expression, isoform 1 is strongly expressed in brain and also detected in heart and lung. Isoform 2 is strongly expressed in pancreas and liver and in lesser quantities in brain, heart, lung and kidney. In terms of tissue distribution, isoform 3 is detected in large amounts in heart and large intestine, is also present in lung, pancreas and thyroid, and to a lesser extent in brain, stomach and kidney.

It is found in the cell membrane. The protein localises to the endomembrane system. It localises to the cytoplasm. The protein resides in the cell junction. Its subcellular location is the focal adhesion. It is found in the adherens junction. The protein localises to the cell projection. It localises to the ruffle membrane. The protein resides in the phagocytic cup. Its subcellular location is the uropodium. It is found in the nucleus. The catalysed reaction is a 1,2-diacyl-sn-glycero-3-phospho-(1D-myo-inositol 4-phosphate) + ATP = a 1,2-diacyl-sn-glycero-3-phospho-(1D-myo-inositol-4,5-bisphosphate) + ADP + H(+). The enzyme catalyses 1-octadecanoyl-2-(5Z,8Z,11Z,14Z)-eicosatetraenoyl-sn-glycero-3-phospho-1D-myo-inositol 4-phosphate + ATP = 1-octadecanoyl-2-(5Z,8Z,11Z,14Z)-eicosatetraenoyl-sn-glycero-3-phospho-1D-myo-inositol 4,5-bisphosphate + ADP + H(+). It carries out the reaction 1-octadecanoyl-2-(9Z)-octadecenoyl-sn-glycero-3-phospho-1D-myo-inositol 4-phosphate + ATP = 1-octadecanoyl-2-(9Z)-octadecenoyl-sn-glycero-3-phospho-1D-myo-inositol 4,5-bisphosphate + ADP + H(+). It catalyses the reaction 1-octadecanoyl-2-(9Z)-octadecenoyl-sn-glycero-3-phospho-1D-myo-inositol + ATP = 1-octadecanoyl-2-(9Z)-octadecenoyl-sn-glycero-3-phospho-1D-myo-inositol 5-phosphate + ADP + H(+). The catalysed reaction is 1-octadecanoyl-2-(9Z,12Z)-octadecadienoyl-sn-glycero-3-phospho-1D-myo-inositol + ATP = 1-octadecanoyl-2-(9Z,12Z)-octadecadienoyl-sn-glycero-3-phospho-1D-myo-inositol 5-phosphate + ADP + H(+). The enzyme catalyses 1-octadecanoyl-2-(5Z,8Z,11Z,14Z-eicosatetraenoyl)-sn-glycero-3-phospho-(1D-myo-inositol) + ATP = 1-octadecanoyl-2-(5Z,8Z,11Z,14Z)-eicosatetraenoyl-sn-glycero-3-phospho-1D-myo-inositol 5-phosphate + ADP + H(+). It carries out the reaction 1,2-di-(9Z,12Z)-octadecadienoyl-sn-glycero-3-phospho-1D-myo-inositol + ATP = 1,2-di(9Z,12Z)-octadecadienoyl-sn-glycero-3-phospho-1D-myo-inositol 5-phosphate + ADP + H(+). Its function is as follows. Catalyzes the phosphorylation of phosphatidylinositol 4-phosphate (PtdIns(4)P/PI4P) to form phosphatidylinositol 4,5-bisphosphate (PtdIns(4,5)P2/PIP2), a lipid second messenger that regulates several cellular processes such as signal transduction, vesicle trafficking, actin cytoskeleton dynamics, cell adhesion, and cell motility. PtdIns(4,5)P2 can directly act as a second messenger or can be utilized as a precursor to generate other second messengers: inositol 1,4,5-trisphosphate (IP3), diacylglycerol (DAG) or phosphatidylinositol-3,4,5-trisphosphate (PtdIns(3,4,5)P3/PIP3). PIP5K1A-mediated phosphorylation of PtdIns(4)P is the predominant pathway for PtdIns(4,5)P2 synthesis. Together with PIP5K1A, is required for phagocytosis, both enzymes regulating different types of actin remodeling at sequential steps. Promotes particle attachment by generating the pool of PtdIns(4,5)P2 that induces controlled actin depolymerization to facilitate Fc-gamma-R clustering. Mediates RAC1-dependent reorganization of actin filaments. Required for synaptic vesicle transport. Controls the plasma membrane pool of PtdIns(4,5)P2 implicated in synaptic vesicle endocytosis and exocytosis. Plays a role in endocytosis mediated by clathrin and AP-2 (adaptor protein complex 2). Required for clathrin-coated pits assembly at the synapse. Participates in cell junction assembly. Modulates adherens junctions formation by facilitating CDH1/cadherin trafficking. Required for focal adhesion dynamics. Modulates the targeting of talins (TLN1 and TLN2) to the plasma membrane and their efficient assembly into focal adhesions. Regulates the interaction between talins (TLN1 and TLN2) and beta-integrins. Required for uropodium formation and retraction of the cell rear during directed migration. Has a role in growth factor-stimulated directional cell migration and adhesion. Required for talin assembly into nascent adhesions forming at the leading edge toward the direction of the growth factor. Negative regulator of T-cell activation and adhesion. Negatively regulates integrin alpha-L/beta-2 (LFA-1) polarization and adhesion induced by T-cell receptor. Together with PIP5K1A has a role during embryogenesis and together with PIP5K1B may have a role immediately after birth. This is Phosphatidylinositol 4-phosphate 5-kinase type-1 gamma from Homo sapiens (Human).